A 231-amino-acid polypeptide reads, in one-letter code: DNA repair protein RecO (231 aa).

This sequence belongs to the RecO family.

Involved in DNA repair and RecF pathway recombination. This chain is DNA repair protein RecO, found in Coxiella burnetii (strain CbuK_Q154) (Coxiella burnetii (strain Q154)).